The sequence spans 29 residues: Acidic phospholipase A2 Omo-E6 (29 aa).

Residues tyrosine 27 and glycine 29 each coordinate Ca(2+).

Ca(2+) serves as cofactor. Expressed by the venom gland.

Its subcellular location is the secreted. It catalyses the reaction a 1,2-diacyl-sn-glycero-3-phosphocholine + H2O = a 1-acyl-sn-glycero-3-phosphocholine + a fatty acid + H(+). Functionally, snake venom phospholipase A2 (PLA2) that inhibits the ADP- and collagen-induced human platelet aggregation. Exhibits strong hydrolytic activities and prefers the anionic micelles (dPPC with deoxycholate) to the zwitterionic micelles (dPPC with Triton X-100). PLA2 catalyzes the calcium-dependent hydrolysis of the 2-acyl groups in 3-sn-phosphoglycerides. This is Acidic phospholipase A2 Omo-E6 from Ovophis monticola (Chinese mountain pitviper).